The sequence spans 379 residues: Early boundary activity protein 3 (379 aa).

The heterotrimeric Elba complex consists of Elba1, Elba2 and Elba3.

The protein resides in the nucleus. In terms of biological role, the heterotrimeric Elba complex is required for chromatin domain boundary function during early embryogenesis. It binds to a 8-bp sequence 5'-CCAATAAG-3' in the Fab-7 insulator or boundary element in the bithorax complex and contributes to its insulator or boundary activity. Elba3 lacks DNA-binding activity and plays the role of an adapter protein, bringing Elba1 and 2 together, thereby establishing a complex that recognizes the asymmetric sequence motif through the BEN domains of Elba1 and 2. In Drosophila melanogaster (Fruit fly), this protein is Early boundary activity protein 3.